The primary structure comprises 78 residues: Large ribosomal subunit protein eL20 (78 aa).

It belongs to the eukaryotic ribosomal protein eL20 family. In terms of assembly, part of the 50S ribosomal subunit. Binds 23S rRNA.

This chain is Large ribosomal subunit protein eL20, found in Methanothermobacter thermautotrophicus (strain ATCC 29096 / DSM 1053 / JCM 10044 / NBRC 100330 / Delta H) (Methanobacterium thermoautotrophicum).